We begin with the raw amino-acid sequence, 179 residues long: Disulfide bond formation protein B (179 aa).

The Cytoplasmic portion of the chain corresponds to 1–14 (MLSYFKELSLNRTA). Residues 15 to 31 (WLLLAFVAFALEASAIY) form a helical membrane-spanning segment. Over 32–49 (FQYGMGLVPCVMCVYERL) the chain is Periplasmic. C41 and C44 are disulfide-bonded. The chain crosses the membrane as a helical span at residues 50–65 (AIFGLLIAGLVGAISP). The Cytoplasmic segment spans residues 66–72 (RFFLTRW). Residues 73-90 (LALLLWGFSAFKGLALAI) traverse the membrane as a helical segment. Residues 91–146 (KHHDYQANPSPWNQCEFKPEFPQTMPFDQWFPSIFAPGPVNCSEKQWEMFGLGMPE) lie on the Periplasmic side of the membrane. C105 and C132 form a disulfide bridge. The chain crosses the membrane as a helical span at residues 147–165 (WLILAFSIFALMFVIVLLS). Topologically, residues 166–179 (QFKRAKPQYRSVFR) are cytoplasmic.

It belongs to the DsbB family.

The protein localises to the cell inner membrane. Functionally, required for disulfide bond formation in some periplasmic proteins. Acts by oxidizing the DsbA protein. The sequence is that of Disulfide bond formation protein B from Actinobacillus pleuropneumoniae serotype 5b (strain L20).